A 718-amino-acid chain; its full sequence is Serine/threonine-protein kinase PAK 5 (718 aa).

Disordered regions lie at residues 1–29, 96–119, 226–245, 264–296, and 339–371; these read MFGK…DPQE, RSNS…IQGH, SPLD…TSRC, YDRR…QEPM, and VFSP…SSSH. The 14-residue stretch at 11–24 folds into the CRIB domain; that stretch reads ISGPSNFEHRVHTG. The linker stretch occupies residues 25–447; the sequence is FDPQEQKFTG…VVSPGDPREY (423 aa). A Phosphoserine modification is found at Ser104. Position 107 is a phosphothreonine (Thr107). Polar residues predominate over residues 226-244; the sequence is SPLDYSFQLTPSRTAGTSR. Over residues 359–371 the composition is skewed to low complexity; that stretch reads QSQSKVGYSSSSH. The Protein kinase domain maps to 448-699; the sequence is LDNFIKIGEG…AQELLGHPFL (252 aa). Residues 454–462 and Lys477 contribute to the ATP site; that span reads IGEGSTGIV. Asp567 (proton acceptor) is an active-site residue.

Belongs to the protein kinase superfamily. STE Ser/Thr protein kinase family. STE20 subfamily. As to quaternary structure, interacts tightly with GTP-bound but not GDP-bound CDC42/p21 and RAC1. Interacts with MARK2, leading to inhibit MARK2 independently of kinase activity. Interacts with RHOD and RHOH. Autophosphorylated when activated by CDC42/p21.

It localises to the mitochondrion. The protein resides in the cytoplasm. It is found in the nucleus. It carries out the reaction L-seryl-[protein] + ATP = O-phospho-L-seryl-[protein] + ADP + H(+). The enzyme catalyses L-threonyl-[protein] + ATP = O-phospho-L-threonyl-[protein] + ADP + H(+). Serine/threonine protein kinase that plays a role in a variety of different signaling pathways including cytoskeleton regulation, cell migration, proliferation or cell survival. Activation by various effectors including growth factor receptors or active CDC42 and RAC1 results in a conformational change and a subsequent autophosphorylation on several serine and/or threonine residues. Phosphorylates the proto-oncogene RAF and stimulates its kinase activity. Promotes cell survival by phosphorylating the BCL2 antagonist of cell death BAD. Phosphorylates CTNND1, probably to regulate cytoskeletal organization and cell morphology. Keeps microtubules stable through MARK2 inhibition and destabilizes the F-actin network leading to the disappearance of stress fibers and focal adhesions. This Rattus norvegicus (Rat) protein is Serine/threonine-protein kinase PAK 5 (Pak5).